The following is a 95-amino-acid chain: Late cornified envelope protein 3B (95 aa).

A compositionally biased stretch (low complexity) spans 1–13 (MSCQQNQQQCQPL). Disordered regions lie at residues 1 to 29 (MSCQ…SAQC) and 68 to 95 (RQSS…GGCC).

It belongs to the LCE family. In terms of tissue distribution, skin-specific. Expression was readily detected in adult trunk skin, adult arm skin, fetal skin, penal skin, vulva, esophagus and tongue. Not expressed in the cervix, rectum, lung, colon, or placenta.

In terms of biological role, a structural component of the cornified envelope of the stratum corneum involved in innate cutaneous host defense. Possesses defensin-like antimicrobial activity against a broad spectrum of Gram-positive and Gram-negative bacteria, both aerobic and anaerobic species. Upon inflammation, may regulate skin barrier repair by shaping cutaneous microbiota composition and immune response to bacterial antigens. The sequence is that of Late cornified envelope protein 3B from Homo sapiens (Human).